The following is a 349-amino-acid chain: 4-hydroxy-2-oxovalerate aldolase 1 (349 aa).

Positions Ile9 to Gln261 constitute a Pyruvate carboxyltransferase domain. Position 17 to 18 (Arg17 to Asp18) interacts with substrate. Asp18 contributes to the Mn(2+) binding site. The active-site Proton acceptor is His21. Substrate-binding residues include Ser171 and His200. The Mn(2+) site is built by His200 and His202. Tyr291 provides a ligand contact to substrate.

The protein belongs to the 4-hydroxy-2-oxovalerate aldolase family.

The catalysed reaction is (S)-4-hydroxy-2-oxopentanoate = acetaldehyde + pyruvate. The sequence is that of 4-hydroxy-2-oxovalerate aldolase 1 from Methylibium petroleiphilum (strain ATCC BAA-1232 / LMG 22953 / PM1).